Consider the following 284-residue polypeptide: Bifunctional protein FolD (284 aa).

NADP(+) contacts are provided by residues 166–168 and isoleucine 232; that span reads GAS.

This sequence belongs to the tetrahydrofolate dehydrogenase/cyclohydrolase family. Homodimer.

It catalyses the reaction (6R)-5,10-methylene-5,6,7,8-tetrahydrofolate + NADP(+) = (6R)-5,10-methenyltetrahydrofolate + NADPH. It carries out the reaction (6R)-5,10-methenyltetrahydrofolate + H2O = (6R)-10-formyltetrahydrofolate + H(+). It functions in the pathway one-carbon metabolism; tetrahydrofolate interconversion. Catalyzes the oxidation of 5,10-methylenetetrahydrofolate to 5,10-methenyltetrahydrofolate and then the hydrolysis of 5,10-methenyltetrahydrofolate to 10-formyltetrahydrofolate. The protein is Bifunctional protein FolD of Shewanella sp. (strain MR-7).